We begin with the raw amino-acid sequence, 326 residues long: Olfactory receptor 11H12 (326 aa).

Residues 1-44 (MCPLTLQVTGLMNVSEPNSSFAFVNEFILQGFTCEWTIQIFLFS) lie on the Extracellular side of the membrane. Residues Asn13 and Asn18 are each glycosylated (N-linked (GlcNAc...) asparagine). The helical transmembrane segment at 45 to 65 (LFTTTYALTITGNGAIAFVLW) threads the bilayer. The Cytoplasmic segment spans residues 66 to 72 (CDWRLHT). The helical transmembrane segment at 73–93 (PMYMFLGNFSFLEIWYVSSTV) threads the bilayer. The Extracellular portion of the chain corresponds to 94-112 (PKMLVNFLSEKKNISFAGC). Residue Asn106 is glycosylated (N-linked (GlcNAc...) asparagine). Cys112 and Cys194 are disulfide-bonded. Residues 113 to 133 (FLQFYFFFSLGTSECLLLTVM) traverse the membrane as a helical segment. The Cytoplasmic segment spans residues 134–158 (AFDQYLAICRPLLYPNIMTGHLCAK). A helical transmembrane segment spans residues 159–179 (LVILCWVCGFLWFLIPIVLIS). Residues 180–216 (QMPFCGPNIIDHVVCDPGPRFALDCVSAPRIQLFCYT) are Extracellular-facing. A helical membrane pass occupies residues 217–237 (LSSLVIFGNFLFIIGSYTLVL). Residues 238 to 259 (KAVLGMPSSTGRHKAFSTCGSH) lie on the Cytoplasmic side of the membrane. A helical transmembrane segment spans residues 260–280 (LAVVSLCYSSLMVMYVSPGLG). At 281–287 (HSTGMQK) the chain is on the extracellular side. The helical transmembrane segment at 288–308 (IETLFYAMVTPLFNPLIYSLQ) threads the bilayer. The Cytoplasmic portion of the chain corresponds to 309–326 (NKEIKAALRKVLGSSNII).

It belongs to the G-protein coupled receptor 1 family.

It is found in the cell membrane. Its function is as follows. Odorant receptor. This Homo sapiens (Human) protein is Olfactory receptor 11H12 (OR11H12).